The sequence spans 376 residues: Glucose-1-phosphate adenylyltransferase (376 aa).

Residues Tyr101, Gly166, 181 to 182, and Ser192 each bind alpha-D-glucose 1-phosphate; that span reads EK.

This sequence belongs to the bacterial/plant glucose-1-phosphate adenylyltransferase family. As to quaternary structure, homotetramer.

The catalysed reaction is alpha-D-glucose 1-phosphate + ATP + H(+) = ADP-alpha-D-glucose + diphosphate. Its pathway is glycan biosynthesis; glycogen biosynthesis. Functionally, involved in the biosynthesis of ADP-glucose, a building block required for the elongation reactions to produce glycogen. Catalyzes the reaction between ATP and alpha-D-glucose 1-phosphate (G1P) to produce pyrophosphate and ADP-Glc. The sequence is that of Glucose-1-phosphate adenylyltransferase from Bacillus cereus (strain ZK / E33L).